The following is a 237-amino-acid chain: Carbonyl reductase family member 4 (237 aa).

Residues Ser-11–Ile-14, Arg-34–Asn-35, Asp-57, and Ala-84–Gly-86 contribute to the NADP(+) site. Ser-135 provides a ligand contact to substrate. Residues Tyr-148, Lys-152, and Ile-181–Thr-183 contribute to the NADP(+) site. Residue Tyr-148 is the Proton acceptor of the active site.

Belongs to the short-chain dehydrogenases/reductases (SDR) family. Homotetramer (in vitro). Heterotetramer with HSD17B8; contains two molecules each of HSD17B8 and CBR4.

The protein resides in the mitochondrion matrix. The protein operates within lipid metabolism; fatty acid biosynthesis. Its function is as follows. The heterotetramer with HSD17B8 has NADH-dependent 3-ketoacyl-acyl carrier protein reductase activity, and thereby plays a role in mitochondrial fatty acid biosynthesis. Within the heterotetramer, HSD17B8 binds NADH; CBR4 binds NADPD. The homotetramer has NADPH-dependent quinone reductase activity. Both homotetramer and the heterotetramer have broad in vitro substrate specificity and can reduce 9,10-phenanthrenequinone, 1,4-benzoquinone and various other o-quinones and p-quinones. This Danio rerio (Zebrafish) protein is Carbonyl reductase family member 4 (cbr4).